The chain runs to 142 residues: Putative pre-16S rRNA nuclease (142 aa).

Belongs to the YqgF nuclease family.

It is found in the cytoplasm. In terms of biological role, could be a nuclease involved in processing of the 5'-end of pre-16S rRNA. This is Putative pre-16S rRNA nuclease from Lawsonia intracellularis (strain PHE/MN1-00).